The following is a 175-amino-acid chain: Probable DNA-directed RNA polymerase subunit delta (175 aa).

One can recognise an HTH HARE-type domain in the interval 14-81 (MALVEIAHEI…SDQTWGLRSW (68 aa)). A disordered region spans residues 110 to 175 (LDLDEFEEVD…YDDEEEDRKD (66 aa)).

It belongs to the RpoE family. In terms of assembly, RNAP is composed of a core of 2 alpha, a beta and a beta' subunits. The core is associated with a delta subunit and one of several sigma factors.

Participates in both the initiation and recycling phases of transcription. In the presence of the delta subunit, RNAP displays an increased specificity of transcription, a decreased affinity for nucleic acids, and an increased efficiency of RNA synthesis because of enhanced recycling. The chain is Probable DNA-directed RNA polymerase subunit delta from Bacillus velezensis (strain DSM 23117 / BGSC 10A6 / LMG 26770 / FZB42) (Bacillus amyloliquefaciens subsp. plantarum).